We begin with the raw amino-acid sequence, 116 residues long: Large ribosomal subunit protein bL20 (116 aa).

The protein belongs to the bacterial ribosomal protein bL20 family.

Functionally, binds directly to 23S ribosomal RNA and is necessary for the in vitro assembly process of the 50S ribosomal subunit. It is not involved in the protein synthesizing functions of that subunit. The protein is Large ribosomal subunit protein bL20 of Nautilia profundicola (strain ATCC BAA-1463 / DSM 18972 / AmH).